Here is a 380-residue protein sequence, read N- to C-terminus: Probable transposase for insertion sequence element IS701 (380 aa).

Involved in the transposition of the insertion sequence. This Microchaete diplosiphon (Fremyella diplosiphon) protein is Probable transposase for insertion sequence element IS701.